The sequence spans 653 residues: Polyadenylate-binding protein, cytoplasmic and nuclear (653 aa).

The segment covering 1–10 (MPSTDLKKQA) has biased composition (basic and acidic residues). Residues 1-77 (MPSTDLKKQA…SVATPSGTAP (77 aa)) form a disordered region. The span at 17–27 (DVNTNNEAVES) shows a compositional bias: polar residues. Residues 53–68 (AAEPSESTSTPTNASS) are compositionally biased toward low complexity. One can recognise an RRM 1 domain in the interval 80-158 (ASLYVGELDP…RPCRIMWSQR (79 aa)). At Thr167 the chain carries Phosphothreonine. RRM domains follow at residues 168-245 (GNVF…HHVS), 261-338 (TNVY…RAQK), and 364-441 (VNLF…LAQR). In terms of domain architecture, PABC spans 569 to 646 (PERFTAADLA…AIGVLQEFVD (78 aa)).

This sequence belongs to the polyadenylate-binding protein type-1 family. In terms of assembly, interacts with cid13.

The protein resides in the cytoplasm. Its subcellular location is the nucleus. Functionally, binds the poly(A) tail of mRNA. Appears to be an important mediator of the multiple roles of the poly(A) tail in mRNA biogenesis, stability and translation. In the nucleus, involved in both mRNA cleavage and polyadenylation. Is also required for efficient mRNA export to the cytoplasm. Acts in concert with a poly(A)-specific nuclease (PAN) to affect poly(A) tail shortening, which may occur concomitantly with either nucleocytoplasmic mRNA transport or translational initiation. In the cytoplasm, stimulates translation initiation and regulates mRNA decay through translation termination-coupled poly(A) shortening, probably mediated by PAN. This is Polyadenylate-binding protein, cytoplasmic and nuclear (pab1) from Schizosaccharomyces pombe (strain 972 / ATCC 24843) (Fission yeast).